The chain runs to 195 residues: Archaetidylinositol phosphate synthase (195 aa).

The next 2 membrane-spanning stretches (helical) occupy residues 27 to 47 (IALP…AASA) and 54 to 74 (LITG…DGAV). Mg(2+) contacts are provided by Asp68, Asp71, Asp89, and Asp93. Catalysis depends on Asp93, which acts as the Proton acceptor. The next 2 helical transmembrane spans lie at 99-119 (IIII…LLAL) and 158-178 (LAGY…LAAL).

This sequence belongs to the CDP-alcohol phosphatidyltransferase class-I family. It depends on Mn(2+) as a cofactor. The cofactor is Mg(2+).

Its subcellular location is the cell membrane. It catalyses the reaction CDP-2,3-bis-O-(phytanyl)-sn-glycerol + 1D-myo-inositol 3-phosphate = saturated 1-archaetidyl-1D-myo-inositol 3-phosphate + CMP + H(+). It participates in lipid metabolism; phospholipid metabolism. In terms of biological role, catalyzes the formation of archaetidylinositol phosphate (AIP) from CDP-archaeol (CDP-ArOH or CDP-2,3-bis-(O-phytanyl)-sn-glycerol) and 1L-myo-inositol 1-phosphate (IP or 1D-myo-inositol 3-phosphate). AIP is a precursor of archaetidyl-myo-inositol (AI), an ether-type inositol phospholipid ubiquitously distributed in archaea membranes and essential for glycolipid biosynthesis in archaea. The protein is Archaetidylinositol phosphate synthase of Methanothermobacter thermautotrophicus (strain ATCC 29096 / DSM 1053 / JCM 10044 / NBRC 100330 / Delta H) (Methanobacterium thermoautotrophicum).